The sequence spans 1076 residues: MRSFIKAHKKSTSFDESPKRHSNFSGNTNNSSQRSSDDSLDFLPSTPSQMNYDSIPPPAKHSPGFESFHRLANKTSKLFKKTSNSNLNSHLASTPTTSTNQTTSNSFVLQNPPTKNTGPPPPLPPPLFPSSSTSSFSRHDNESEYTAYKKTSPAKDFNRTTDSLPAIKGTITHSWGDSKVESHVIILNDPASPASNTSEATSSKQFKTPIIGNENLTSTTSPSNLEPAIRILNKNKGKQQENIDDAEDGSSKKEHHVYKALALAKNRNRQARIHSHDDIINLGKASQMDMSLLAAAFSGNSTTTINNDQSSNEQTDEKILDIERVTTTSTLTSSETTSPINKSPCFYSQTLSLSPKIRHGDLQSSPSKVNKNDSQNETLNKKKVRISLNRKEEEKVYSLNNNSDEYSVNEKETHKANDCNDESSENGDGDNDHDDDYDDDDDDDDDDDESEFSFEYAGINVRTSSVKYYSKPEPAANVYIDDLYEDENFDDDMNCIEDDESGNEGNEICGLSTRFEETSLKSNKVKKFNDLFNLSDDDEEEDGKDNSNNGDENESDNLYQKRLENGKETFNGNHGGHHDDASLGETVDNKEQFLINDNVKKPIQKYNDLFDLSDEDDNDDKEMSEAESYMFSDEAPSIESGPANAKSTRGIYSQSNKNIIRDGKPNYSFSLKRNNSDDETEHTSAIKASLTGTTGSTKPTVKSFSDIFNVDDSASDAESDSGTGGNNSNGLVSNDSERQVSLQSSLYETKSESHPPNHPHSQILQTPAKIVITPSVSDAQSQALAITDDDGEDDDDDTSSILRTPFQLIDSSHSQQPHYASPQYTAVLNSPPLPPPARSQSLKYHDLNCDLDSEVPRPMSNLFFIDEAEEDEYNQKSKFFDFDHYDIDEINGIPEDFNFSDSERDDLNRRTLKSPLRGGSKNREVSPFSSVSSSFRSTHSFNGKLTINQGAKELAPMKNKIELTNKTVTFFNSNNWNTYDCNSLSRKTSSQMRDSKYQNHNVGQNVEPSSVLSPQHQISNGLDGKCNDNYVISPNLPTTITPTNSFTKPTPEFSNDYSLSPIQETPSSVQSSPKRA.

Basic residues predominate over residues 1-11 (MRSFIKAHKKS). 4 disordered regions span residues 1 to 66 (MRSF…PGFE), 85 to 162 (SNLN…RTTD), 190 to 223 (PASP…TSPS), and 234 to 253 (KNKG…SSKK). Over residues 23–34 (NFSGNTNNSSQR) the composition is skewed to polar residues. Low complexity predominate over residues 93–106 (STPTTSTNQTTSNS). Over residues 107–117 (FVLQNPPTKNT) the composition is skewed to polar residues. Residues 118-128 (GPPPPLPPPLF) show a composition bias toward pro residues. 2 stretches are compositionally biased toward polar residues: residues 193–206 (PASN…SKQF) and 214–223 (ENLTSTTSPS). Residues serine 275 and serine 354 each carry the phosphoserine modification. Disordered stretches follow at residues 357 to 450 (IRHG…DDES), 534 to 557 (LSDD…ESDN), and 566 to 585 (GKET…SLGE). Positions 362–378 (LQSSPSKVNKNDSQNET) are enriched in polar residues. 2 positions are modified to phosphoserine: serine 403 and serine 407. Residues 408-418 (VNEKETHKAND) show a composition bias toward basic and acidic residues. Acidic residues predominate over residues 419–450 (CNDESSENGDGDNDHDDDYDDDDDDDDDDDES). Residues 576–585 (GHHDDASLGE) are compositionally biased toward basic and acidic residues. 2 positions are modified to phosphoserine: serine 632 and serine 676. 5 disordered regions span residues 658 to 701 (NIIR…KPTV), 713 to 762 (SASD…PHSQ), 909 to 931 (RRTL…FSSV), 1000 to 1020 (HNVG…QISN), and 1042 to 1076 (PTNS…PKRA). Polar residues-rich tracts occupy residues 690–701 (LTGTTGSTKPTV) and 739–748 (QVSLQSSLYE).

Belongs to the ZRG8 family. In terms of assembly, interacts with BUD27, GIS1 and SSD1.

It localises to the cytoplasm. The protein localises to the bud. It is found in the bud neck. Its subcellular location is the bud tip. In terms of biological role, involved in the integrity functions of RAM, a conserved signaling network that regulates maintenance of polarized growth and daughter-cell-specific transcription. The protein is Zinc-regulated protein 8 (ZRG8) of Saccharomyces cerevisiae (strain ATCC 204508 / S288c) (Baker's yeast).